Reading from the N-terminus, the 569-residue chain is MSPAMLQASSLCVSAALSGAASRPGRLASQGHQGKRAVAQPLAASAVTEAAPPAPVVAPPARPVDAPRRRGGRGGGGGGGELVAWKSVRQERWEGALEVDGELPLWLDGTYLRNGPGLWNLGDYGFRHLFDGYATLVRVSFRGGRAVGAHRQIESEAYKAARAHGKVCYREFSEVPKPDNFLSYVGQLATLFSGSSLTDNSNTGVVMLGDGRVLCLTETIKGSIQVDPDTLDTVGKFQYTDKLGGLIHSAHPIVTDTEFWTLIPDLIRPGYVVARMDAGSNERQFVGRVDCRGGPAPGWVHSFPVTEHYVVVPEMPLRYCAKNLLRAEPTPLYKFEWHLESGSYMHVMCKASGKIVASVEVPPFVTFHFINAYEETDEEGRVTAIIADCCEHNANTAILDKLRLHNLRSSSGQDVLPDARVGRFRIPLDGSQFGELETALDPEEHGRGMDMCSINPAHVGREYRYAYACGARRPCNFPNTLTKVDLVERTAKNWHEEGSVPSEPFFVPRPGATEEDDGVAISMVSAKDGSGYALVLDGKTFEEVARAKFPYGLPYGLHCCWVPRKRNSK.

The N-terminal 43 residues, 1–43 (MSPAMLQASSLCVSAALSGAASRPGRLASQGHQGKRAVAQPLA), are a transit peptide targeting the chloroplast. Residues 23–81 (RPGRLASQGHQGKRAVAQPLAASAVTEAAPPAPVVAPPARPVDAPRRRGGRGGGGGGGE) form a disordered region. Over residues 52–62 (PPAPVVAPPAR) the composition is skewed to pro residues. Fe cation contacts are provided by histidine 251, histidine 301, histidine 368, and histidine 558.

The protein belongs to the carotenoid oxygenase family. Fe(2+) serves as cofactor. Expressed in parenchyma cells of the root stele, shoot apex, leaf buds, xylem parenchyma cells of the stem, inflorescences and panicles.

The protein resides in the plastid. It localises to the chloroplast. The enzyme catalyses 9-cis-10'-apo-beta-carotenal + 2 O2 = (2E,4E,6E)-7-hydroxy-4-methylhepta-2,4,6-trienal + (11R)-carlactone. It catalyses the reaction all-trans-10'-apo-beta-carotenal + O2 = (2E,4E,6E)-4-methylocta-2,4,6-trienedial + 13-apo-beta-carotenone. Involved in strigolactones biosynthesis by cleaving the C(27) 9-cis-10'-apo-beta-carotenal produced by CCD7. Produces the C(19) carlactone and a C(8) hydroxyaldehyde. Also shows lower activity with all-trans-10'-apo-beta-carotenal producing a C(9) dialdehyde and the C(18) 13-apo-beta-carotenone. Strigolactones are hormones that inhibit tillering and shoot branching through the MAX-dependent pathway, contribute to the regulation of shoot architectural response to phosphate-limiting conditions and function as rhizosphere signal that stimulates hyphal branching of arbuscular mycorrhizal fungi and trigger seed germination of root parasitic weeds. This is Carotenoid cleavage dioxygenase 8 homolog B, chloroplastic (CCD8B) from Oryza sativa subsp. japonica (Rice).